A 293-amino-acid chain; its full sequence is Ribonuclease P/MRP protein subunit RPP1 (293 aa).

This sequence belongs to the eukaryotic/archaeal RNase P protein component 3 family. In terms of assembly, component of nuclear RNase P and RNase MRP complexes. RNase P consists of an RNA moiety and at least 9 protein subunits including POP1, POP3, POP4, POP5, POP6, POP7, POP8, RPP1 and RPR2. RNase MRP complex consists of an RNA moiety and at least 10 protein subunits including POP1, POP3, POP4, POP5, POP6, POP7, POP8, RMP1, RPP1 and SNM1, many of which are shared with the RNase P complex.

Its subcellular location is the nucleus. It catalyses the reaction Endonucleolytic cleavage of RNA, removing 5'-extranucleotides from tRNA precursor.. Functionally, component of ribonuclease P, a protein complex that generates mature tRNA molecules by cleaving their 5'-ends. Also a component of RNase MRP, which cleaves pre-rRNA sequences. The polypeptide is Ribonuclease P/MRP protein subunit RPP1 (RPP1) (Saccharomyces cerevisiae (strain ATCC 204508 / S288c) (Baker's yeast)).